The primary structure comprises 1180 residues: RecBCD enzyme subunit RecB (1180 aa).

Residues 1–852 (MITTIPKSIN…QSGKNHISTK (852 aa)) are DNA-binding and helicase activity, interacts with RecC. Residues 3 to 448 (TTIPKSINVT…YFLDTNWRSS (446 aa)) enclose the UvrD-like helicase ATP-binding domain. 24–31 (ASAGTGKT) lines the ATP pocket. Residues 478–745 (SSRINKTTKF…KIVSIHKSKG (268 aa)) enclose the UvrD-like helicase C-terminal domain. The segment at 905–1180 (NYNFTSYSQL…EIIKKLEQIF (276 aa)) is nuclease activity, interacts with RecD and RecA. H964, D1075, and D1088 together coordinate Mg(2+). The active-site For nuclease activity is D1088.

This sequence belongs to the helicase family. UvrD subfamily. As to quaternary structure, heterotrimer of RecB, RecC and RecD. All subunits contribute to DNA-binding. Interacts with RecA. Requires Mg(2+) as cofactor.

It carries out the reaction Exonucleolytic cleavage (in the presence of ATP) in either 5'- to 3'- or 3'- to 5'-direction to yield 5'-phosphooligonucleotides.. The catalysed reaction is Couples ATP hydrolysis with the unwinding of duplex DNA by translocating in the 3'-5' direction.. It catalyses the reaction ATP + H2O = ADP + phosphate + H(+). Its function is as follows. A helicase/nuclease that prepares dsDNA breaks (DSB) for recombinational DNA repair. Binds to DSBs and unwinds DNA via a highly rapid and processive ATP-dependent bidirectional helicase activity. Unwinds dsDNA until it encounters a Chi (crossover hotspot instigator) sequence from the 3' direction. Cuts ssDNA a few nucleotides 3' to the Chi site. The properties and activities of the enzyme are changed at Chi. The Chi-altered holoenzyme produces a long 3'-ssDNA overhang and facilitates RecA-binding to the ssDNA for homologous DNA recombination and repair. Holoenzyme degrades any linearized DNA that is unable to undergo homologous recombination. In the holoenzyme this subunit contributes ATPase, 3'-5' helicase, exonuclease activity and loads RecA onto ssDNA. This Buchnera aphidicola subsp. Baizongia pistaciae (strain Bp) protein is RecBCD enzyme subunit RecB.